Reading from the N-terminus, the 293-residue chain is Undecaprenyl-diphosphatase (293 aa).

Transmembrane regions (helical) follow at residues I3–P23, K43–F63, L85–I105, L109–A129, V203–E223, I238–L258, and F269–I289.

The protein belongs to the UppP family.

The protein localises to the cell inner membrane. The enzyme catalyses di-trans,octa-cis-undecaprenyl diphosphate + H2O = di-trans,octa-cis-undecaprenyl phosphate + phosphate + H(+). Functionally, catalyzes the dephosphorylation of undecaprenyl diphosphate (UPP). Confers resistance to bacitracin. The protein is Undecaprenyl-diphosphatase of Ralstonia nicotianae (strain ATCC BAA-1114 / GMI1000) (Ralstonia solanacearum).